A 638-amino-acid chain; its full sequence is NBPF family member NBPF4 (638 aa).

2 coiled-coil regions span residues 10–43 (SERA…EKFL) and 69–115 (DSVL…KLRE). The interval 157–285 (HLVHKLSPEN…VPPRHHDKSN (129 aa)) is disordered. Acidic residues predominate over residues 165 to 179 (ENDEDEDEDEDDKDE). One can recognise an Olduvai 1 domain in the interval 174–261 (EDDKDEEVEK…EEEEALNIPP (88 aa)). Residues 192-202 (EVQKTEEKEVP) show a composition bias toward basic and acidic residues. Low complexity predominate over residues 214-226 (SNSHNPSNSNQPH). Composition is skewed to basic and acidic residues over residues 232–251 (TFKE…HPHD) and 264–273 (QNDHEEEEGK). Olduvai domains lie at 326–399 (EKQS…ALVD) and 400–503 (KIKK…SQAQ). The interval 562–584 (GMKNPPQLEDDALEGSASNTQGR) is disordered.

It belongs to the NBPF family. In terms of tissue distribution, expressed in testis.

The protein resides in the cytoplasm. The protein is NBPF family member NBPF4 of Homo sapiens (Human).